The primary structure comprises 695 residues: UvrABC system protein B (695 aa).

The 384-residue stretch at 31–414 folds into the Helicase ATP-binding domain; that stretch reads EGIESGLSFQ…EIQRSGQIAE (384 aa). Residue 44–51 participates in ATP binding; sequence GVTGSGKT. Residues 97–120 carry the Beta-hairpin motif; the sequence is YYDYYQPEAYVPSRDLFIEKDSSI. Positions 435-601 constitute a Helicase C-terminal domain; sequence QVDDLMSEVS…GVNKRIKDLI (167 aa). Positions 632 to 667 constitute a UVR domain; that stretch reads AKEIQRLEKSMLEAARNMEFEQAAQYRDEIKNLRSK.

Belongs to the UvrB family. In terms of assembly, forms a heterotetramer with UvrA during the search for lesions. Interacts with UvrC in an incision complex.

It is found in the cytoplasm. Its function is as follows. The UvrABC repair system catalyzes the recognition and processing of DNA lesions. A damage recognition complex composed of 2 UvrA and 2 UvrB subunits scans DNA for abnormalities. Upon binding of the UvrA(2)B(2) complex to a putative damaged site, the DNA wraps around one UvrB monomer. DNA wrap is dependent on ATP binding by UvrB and probably causes local melting of the DNA helix, facilitating insertion of UvrB beta-hairpin between the DNA strands. Then UvrB probes one DNA strand for the presence of a lesion. If a lesion is found the UvrA subunits dissociate and the UvrB-DNA preincision complex is formed. This complex is subsequently bound by UvrC and the second UvrB is released. If no lesion is found, the DNA wraps around the other UvrB subunit that will check the other stand for damage. This is UvrABC system protein B from Nitrosomonas europaea (strain ATCC 19718 / CIP 103999 / KCTC 2705 / NBRC 14298).